A 184-amino-acid chain; its full sequence is Serine recombinase PinE (184 aa).

The Resolvase/invertase-type recombinase catalytic domain occupies 1–134; sequence MLIGYVRVST…AGLETARAQG (134 aa). The O-(5'-phospho-DNA)-serine intermediate role is filled by Ser9. Residues 161 to 180 constitute a DNA-binding region (H-T-H motif); the sequence is RQKVAIIYDVGVSTLYKRFP.

It belongs to the site-specific recombinase resolvase family.

Its function is as follows. This protein catalyzes the inversion of an 1800-bp E.coli DNA fragment, the P region, which can exist in either orientation. The function of the inversion is not yet clear. The protein is Serine recombinase PinE (pinE) of Escherichia coli (strain K12).